Consider the following 288-residue polypeptide: MSQISAKDVKELRDTTGVGMMECKKALEETGGDMQKAVEYLRKKGAAMAAKRADREASEGAVCILMSDDQKTGVILELNCETDFVARGEVFTGFANELAELALANNCESREDLLAINLGEAYGNEKVEDALKSMTGKVGEKLELKRLAMLKAEDGVLESYIHPGSQLGALIAVETDKPEETKALAKDLAMQVAAASPIEVGRDAVPAELVEKEKEIYRQQALAEGKKEEFVDKIVMGRINKYYQEVVLTEQTFIKDQNARVSGVLDDFMKKNQAQVKIKAFVRYQLGA.

Positions T82 to V85 are involved in Mg(2+) ion dislocation from EF-Tu.

The protein belongs to the EF-Ts family.

It is found in the cytoplasm. Its function is as follows. Associates with the EF-Tu.GDP complex and induces the exchange of GDP to GTP. It remains bound to the aminoacyl-tRNA.EF-Tu.GTP complex up to the GTP hydrolysis stage on the ribosome. The sequence is that of Elongation factor Ts from Chlorobaculum parvum (strain DSM 263 / NCIMB 8327) (Chlorobium vibrioforme subsp. thiosulfatophilum).